The sequence spans 141 residues: Transcription antitermination protein NusB (141 aa).

The protein belongs to the NusB family.

Its function is as follows. Involved in transcription antitermination. Required for transcription of ribosomal RNA (rRNA) genes. Binds specifically to the boxA antiterminator sequence of the ribosomal RNA (rrn) operons. This is Transcription antitermination protein NusB from Neisseria meningitidis serogroup C (strain 053442).